We begin with the raw amino-acid sequence, 1224 residues long: Coatomer subunit alpha (1224 aa).

4 WD repeats span residues 3–38 (TKFE…LWDY), 42–80 (TLID…VWNY), 84–122 (RCLF…VWNW), and 126–164 (TCVC…VWDI). A Phosphoserine modification is found at S173. T185 is subject to Phosphothreonine. 3 WD repeats span residues 195 to 234 (AVVK…IWRM), 241 to 278 (EVDT…VWDM), and 282 to 319 (TGVQ…VFKL). At S402 the chain carries Phosphoserine. T591 is subject to Phosphothreonine. The residue at position 895 (S895) is a Phosphoserine. R965 is subject to Omega-N-methylarginine. S1193 carries the post-translational modification Phosphoserine.

In terms of assembly, oligomeric complex that consists of at least the alpha, beta, beta', gamma, delta, epsilon and zeta subunits. Interacts with SCYL1. Interacts with JAGN1. Interacts with TMEM41B. Interacts with SVEP1. Probably interacts with PEX11A. Uniformly expressed in a wide range of adult and fetal tissues. Xenin is found in gastric, duodenal and jejunal mucosa. Circulates in the blood. Seems to be confined to specific endocrine cells.

Its subcellular location is the cytoplasm. It localises to the golgi apparatus membrane. The protein resides in the cytoplasmic vesicle. It is found in the COPI-coated vesicle membrane. The protein localises to the secreted. Functionally, the coatomer is a cytosolic protein complex that binds to dilysine motifs and reversibly associates with Golgi non-clathrin-coated vesicles, which further mediate biosynthetic protein transport from the ER, via the Golgi up to the trans Golgi network. Coatomer complex is required for budding from Golgi membranes, and is essential for the retrograde Golgi-to-ER transport of dilysine-tagged proteins. In mammals, the coatomer can only be recruited by membranes associated to ADP-ribosylation factors (ARFs), which are small GTP-binding proteins; the complex also influences the Golgi structural integrity, as well as the processing, activity, and endocytic recycling of LDL receptors. In terms of biological role, xenin stimulates exocrine pancreatic secretion. It inhibits pentagastrin-stimulated secretion of acid, to induce exocrine pancreatic secretion and to affect small and large intestinal motility. In the gut, xenin interacts with the neurotensin receptor. In Homo sapiens (Human), this protein is Coatomer subunit alpha (COPA).